The chain runs to 330 residues: Diacylglycerol acyltransferase/mycolyltransferase Ag85B (330 aa).

An N-terminal signal peptide occupies residues Met1 to Ala40. Leu82–Arg83 contributes to the substrate binding site. The interval Phe98–Ile108 is fibronectin-binding. Cys127 and Cys132 form a disulfide bridge. Residues Ser166 and Asp194 each coordinate substrate. Ser166 acts as the Nucleophile in catalysis. Glu270 is an active-site residue. Residues Phe272 to Ser275, Lys279, and His302 to Trp304 each bind substrate. His302 is an active-site residue.

This sequence belongs to the mycobacterial A85 antigen family.

It localises to the secreted. It catalyses the reaction 2 alpha,alpha'-trehalose 6-mycolate = alpha,alpha'-trehalose 6,6'-bismycolate + alpha,alpha-trehalose. The catalysed reaction is an acyl-CoA + a 1,2-diacyl-sn-glycerol = a triacyl-sn-glycerol + CoA. Its function is as follows. The antigen 85 proteins (FbpA, FbpB, FbpC) are responsible for the high affinity of mycobacteria for fibronectin, a large adhesive glycoprotein, which facilitates the attachment of M.tuberculosis to murine alveolar macrophages (AMs). They also help to maintain the integrity of the cell wall by catalyzing the transfer of mycolic acids to cell wall arabinogalactan and through the synthesis of alpha,alpha-trehalose dimycolate (TDM, cord factor). They catalyze the transfer of a mycoloyl residue from one molecule of alpha,alpha-trehalose monomycolate (TMM) to another TMM, leading to the formation of TDM. This is Diacylglycerol acyltransferase/mycolyltransferase Ag85B (fbpB) from Mycobacterium scrofulaceum.